The chain runs to 181 residues: ATP synthase subunit b 2 (181 aa).

A compositionally biased stretch (low complexity) spans 1–12 (MAEGHGTTAHTG). Residues 1 to 20 (MAEGHGTTAHTGAEGGHKAP) are disordered. A helical membrane pass occupies residues 33-53 (LVSLLIAFVALYLIVSKVALP).

The protein belongs to the ATPase B chain family. In terms of assembly, F-type ATPases have 2 components, F(1) - the catalytic core - and F(0) - the membrane proton channel. F(1) has five subunits: alpha(3), beta(3), gamma(1), delta(1), epsilon(1). F(0) has three main subunits: a(1), b(2) and c(10-14). The alpha and beta chains form an alternating ring which encloses part of the gamma chain. F(1) is attached to F(0) by a central stalk formed by the gamma and epsilon chains, while a peripheral stalk is formed by the delta and b chains.

It localises to the cell inner membrane. In terms of biological role, f(1)F(0) ATP synthase produces ATP from ADP in the presence of a proton or sodium gradient. F-type ATPases consist of two structural domains, F(1) containing the extramembraneous catalytic core and F(0) containing the membrane proton channel, linked together by a central stalk and a peripheral stalk. During catalysis, ATP synthesis in the catalytic domain of F(1) is coupled via a rotary mechanism of the central stalk subunits to proton translocation. Its function is as follows. Component of the F(0) channel, it forms part of the peripheral stalk, linking F(1) to F(0). The b'-subunit is a diverged and duplicated form of b found in plants and photosynthetic bacteria. This Rhodopseudomonas palustris (strain BisA53) protein is ATP synthase subunit b 2 (atpF2).